We begin with the raw amino-acid sequence, 601 residues long: Elongation factor 4 (601 aa).

Residues 7–189 (RNIRNFSIIA…AIVHRIPPPA (183 aa)) form the tr-type G domain. Residues 19–24 (DHGKST) and 136–139 (NKID) contribute to the GTP site.

The protein belongs to the TRAFAC class translation factor GTPase superfamily. Classic translation factor GTPase family. LepA subfamily.

It localises to the cell inner membrane. The enzyme catalyses GTP + H2O = GDP + phosphate + H(+). Required for accurate and efficient protein synthesis under certain stress conditions. May act as a fidelity factor of the translation reaction, by catalyzing a one-codon backward translocation of tRNAs on improperly translocated ribosomes. Back-translocation proceeds from a post-translocation (POST) complex to a pre-translocation (PRE) complex, thus giving elongation factor G a second chance to translocate the tRNAs correctly. Binds to ribosomes in a GTP-dependent manner. The chain is Elongation factor 4 from Xanthomonas oryzae pv. oryzae (strain MAFF 311018).